Consider the following 591-residue polypeptide: V-type ATP synthase alpha chain (591 aa).

233 to 240 (GPFGAGKT) contributes to the ATP binding site.

The protein belongs to the ATPase alpha/beta chains family.

It catalyses the reaction ATP + H2O + 4 H(+)(in) = ADP + phosphate + 5 H(+)(out). In terms of biological role, produces ATP from ADP in the presence of a proton gradient across the membrane. The V-type alpha chain is a catalytic subunit. This is V-type ATP synthase alpha chain from Streptococcus pneumoniae serotype 19F (strain G54).